A 204-amino-acid polypeptide reads, in one-letter code: Large ribosomal subunit protein uL4 (204 aa).

The segment at 47-69 is disordered; sequence KAQKTRAEVSGGGKKPWRQKGTG.

The protein belongs to the universal ribosomal protein uL4 family. As to quaternary structure, part of the 50S ribosomal subunit.

One of the primary rRNA binding proteins, this protein initially binds near the 5'-end of the 23S rRNA. It is important during the early stages of 50S assembly. It makes multiple contacts with different domains of the 23S rRNA in the assembled 50S subunit and ribosome. In terms of biological role, forms part of the polypeptide exit tunnel. The polypeptide is Large ribosomal subunit protein uL4 (Cellvibrio japonicus (strain Ueda107) (Pseudomonas fluorescens subsp. cellulosa)).